A 538-amino-acid polypeptide reads, in one-letter code: MSSPVIGITFGNTSSSIAYINPKNDVDVIANPDGERAIPSALSYVGEDEYHGGQALQQLIRNPKNTIINFRDFIGLPFDKCDVSKCANGAPAVEVDGKVGFVISRGEGKEEKLTVDEVVSRHLNRLKLAAEDYIGSAVKEAVLTVPTNFSEEQKTALKASAAKIGLQIVQFINEPSAALLAHAEQFPFEKDVNVVVADFGGIRSDAAVIAVRNGIFTILATAHDLSLGGDNLDTELVEYFASEFQKKYQANPRKNARSLAKLKANSSITKKTLSNATSATISIDSLADGFDYHASINRMRYELVANKVFAQFSSFVDSVIAKAELDPLDIDAVLLTGGVSFTPKLTTNLEYTLPESVEILGPQNKNASNNPNELAASGAALQARLISDYDADELAEALQPVIVNTPHLKKPIGLIGAKGEFHPVLLAETSFPVQKKLTLKQAKGDFLIGVYEGDHHIEEKTLEPIPKEENAEEDDESEWSDDEPEVVREKLYTLGTKLMELGIKNANGVEIIFNINKDGALRVTARDLKTGNAVKGEL.

Positions 400–538 (PVIVNTPHLK…KTGNAVKGEL (139 aa)) are peptide-binding domain. Positions 464–484 (PIPKEENAEEDDESEWSDDEP) are disordered. Residues 470–484 (NAEEDDESEWSDDEP) show a composition bias toward acidic residues. Phosphoserine is present on residues Ser-477 and Ser-480.

Belongs to the heat shock protein 70 family. As to quaternary structure, RAC is a heterodimer of the Hsp70/DnaK-type chaperone SSZ1 and the Hsp40/DnaJ-type chaperone ZUO1. RAC associates with ribosomes via ZUO1.

It localises to the cytoplasm. Component of the ribosome-associated complex (RAC), a heterodimeric chaperone complex involved in regulation of accurate translation termination and in folding or maintaining nascent polypeptides in a folding-competent state. RAC stimulates the ATPase activity of the ribosome-associated pool of Hsp70-type chaperones SSB1/SSB2 that bind to the nascent polypeptide chain. SSZ1 is required for ZUO1 to function efficiently as a J-protein for SSB1/SSB2. Also involved in pleiotropic drug resistance by post-translational activation of transcription factor PDR1. In Saccharomyces cerevisiae (strain ATCC 204508 / S288c) (Baker's yeast), this protein is Ribosome-associated complex subunit SSZ1 (SSZ1).